Consider the following 364-residue polypeptide: DNA polymerase IV (364 aa).

Positions 14-198 (IIHIDMDAFF…LPIEKFHGVG (185 aa)) constitute a UmuC domain. Mg(2+)-binding residues include D18 and D116. E117 is a catalytic residue.

The protein belongs to the DNA polymerase type-Y family. As to quaternary structure, monomer. It depends on Mg(2+) as a cofactor.

It localises to the cytoplasm. It catalyses the reaction DNA(n) + a 2'-deoxyribonucleoside 5'-triphosphate = DNA(n+1) + diphosphate. Its function is as follows. Poorly processive, error-prone DNA polymerase involved in untargeted mutagenesis. Copies undamaged DNA at stalled replication forks, which arise in vivo from mismatched or misaligned primer ends. These misaligned primers can be extended by PolIV. Exhibits no 3'-5' exonuclease (proofreading) activity. May be involved in translesional synthesis, in conjunction with the beta clamp from PolIII. The chain is DNA polymerase IV from Streptococcus pyogenes serotype M4 (strain MGAS10750).